A 216-amino-acid polypeptide reads, in one-letter code: UPF0598 protein C8orf82 (216 aa).

Belongs to the UPF0598 family.

This is UPF0598 protein C8orf82 (C8orf82) from Homo sapiens (Human).